A 538-amino-acid polypeptide reads, in one-letter code: Syncytin-2 (538 aa).

The first 15 residues, 1-15, serve as a signal peptide directing secretion; sequence MGLLLLVLILTPLLA. The Extracellular segment spans residues 31–478; that stretch reads LLQSTGSPYS…GWLNWEGTWK (448 aa). A CXXC motif is present at residues 43–46; that stretch reads CWLC. Disulfide bonds link Cys43/Cys46, Cys43/Cys439, and Cys431/Cys438. Residues Asn133, Asn146, Asn177, Asn220, Asn241, Asn247, Asn312, and Asn332 are each glycosylated (N-linked (GlcNAc...) asparagine). The tract at residues 354–374 is fusion peptide; sequence FIPLLAGLGILAGTGTGIAGI. A CKS-17 motif is present at residues 414-430; it reads LQNRRGLDMLTAAQGGI. The CX6CC signature appears at 431 to 439; sequence CLALDEKCC. N-linked (GlcNAc...) asparagine glycosylation occurs at Asn443. The helical transmembrane segment at 479 to 499 threads the bilayer; it reads WFSWVLPFIGPFVSLLLLLLF. At 500–538 the chain is on the cytoplasmic side; the sequence is GPCLLNLITQFVSSRLQAIKLQTNLSAGRRPRTIQESPF.

Belongs to the gamma type-C retroviral envelope protein family. HERV class-I FRD env subfamily. The surface and transmembrane proteins form a heterodimer. They are attached by non-covalent interactions or by a labile interchain disulfide bond. Specific enzymatic cleavages in vivo yield the mature SU and TM proteins. In terms of processing, the CXXC motif is highly conserved across a broad range of retroviral envelope proteins. It is thought to participate in the formation of a labile disulfide bond possibly with the CX6CC motif present in the transmembrane protein.

Its subcellular location is the cell membrane. This endogenous retroviral envelope protein has retained its original fusogenic properties and participates in trophoblast fusion and the formation of a syncytium during placenta morphogenesis. The interaction with MFSD2A is apparently important for this process. In terms of biological role, endogenous envelope proteins may have kept, lost or modified their original function during evolution and this one is unable to confer infectivity. This Hylobates moloch (Silvery gibbon) protein is Syncytin-2 (ERVFRD-1).